We begin with the raw amino-acid sequence, 315 residues long: B3 domain-containing protein At1g05920 (315 aa).

Positions 24-129 (MISRDNQKKT…PQVASVPKSV (106 aa)) are disordered. Composition is skewed to basic and acidic residues over residues 39–51 (VREEKGKRREEMI), 66–83 (KEGKGKRREEMISRDNRT), and 100–114 (FDHVPRGTREPHAYL). The segment at residues 204-306 (INTVIQNDFL…ILCFALVPPT (103 aa)) is a DNA-binding region (TF-B3).

It localises to the nucleus. The protein is B3 domain-containing protein At1g05920 of Arabidopsis thaliana (Mouse-ear cress).